A 769-amino-acid polypeptide reads, in one-letter code: MLSNRAFGETIEDYEVQHLLGKGGFATVYKARCLHTHQDVAIKMIDKKLIQGTGLTSRVRQEVEIHSRLKHPSVLQLYTFFQDANYVYLVLELAHNGELHRYMNHIARHFTETEAASILKQVVAGLLYLHSHNIMHRDISLSNLLLSREMHVKIADFGLATQLKRPDERHMTMCGTPNYISPEVVSRSSHGLPADVWSVGCMLYTLLVGRPPFETDAVQSTLNKVVMSEYIMPAHLSYEAQDLINKLLKKLPHERITLEAVLCHPFMLKCSNGGHSAPGALNMFSQSMESGDSGIITFASSDSRNSQQIRSVENSGPQQVLPQIREEFKQVHHKLPYEQPGLFGQASTGLAEPNWTGAAKTSAFRMETGMVPNSKPASLKEDRISVPPLNTKRLLPTRYKTKNAIMSILRNGEVVLEFLKFRPTYNEDRINDICRISDDGQRIIIYQPDPGRGLPVREQPPDLQIPSGDCVYNYDNLPNKHWKKYIYGARFVGLVKSKTPKVTYFSTLGKCQLMETMTDSEIRFYSGAKLLKAPTEGLKVYDRNGMLLSDHSCSESRSLIEHGNECFTHCVNISNALEVAQTKDNSCFPVTIGRRPITDVQPAQRLDGLRDTTNITFSTPKSNQGSINFSLSTISSTRNTSDFGTNCSRSNMLAAHQNIPIKRINVPDIGIATELSHGVVQVQFYDGSVVSVIPSMQGGGITYTQPNGTSTHFGKDDDLPFPVRDRVGQIPNIQLKLKTAPLLGSGRKTDYNNAMTPKTTTPYYNRMLL.

Residues 14 to 267 form the Protein kinase domain; the sequence is YEVQHLLGKG…LEAVLCHPFM (254 aa). ATP is bound by residues 20–28 and Lys43; that span reads LGKGGFATV. Residue Asp138 is the Proton acceptor of the active site. The 118-residue stretch at 381–498 folds into the Cryptic POLO box 1 (CPB1) domain; the sequence is EDRISVPPLN…ARFVGLVKSK (118 aa). One can recognise a Cryptic POLO box 2 (CPB2) domain in the interval 499-602; it reads TPKVTYFSTL…GRRPITDVQP (104 aa). Residues 660 to 739 enclose the POLO box domain; the sequence is PIKRINVPDI…IPNIQLKLKT (80 aa).

This sequence belongs to the protein kinase superfamily. Ser/Thr protein kinase family. CDC5/Polo subfamily. As to quaternary structure, homodimer. Post-translationally, ubiquitinated by the SCF(Slimb) ubiquitin ligase complex; leading to its degradation by the proteasome during interphase and regulating centriole number and ensuring the block to centriole reduplication.

Its subcellular location is the cytoplasm. It localises to the cytoskeleton. It is found in the microtubule organizing center. The protein resides in the centrosome. The protein localises to the centriole. It carries out the reaction L-seryl-[protein] + ATP = O-phospho-L-seryl-[protein] + ADP + H(+). It catalyses the reaction L-threonyl-[protein] + ATP = O-phospho-L-threonyl-[protein] + ADP + H(+). Functionally, serine/threonine-protein kinase that plays a central role in centriole duplication. Able to trigger procentriole formation on the surface of the mother centriole cylinder, using mother centriole as a platform, leading to the recruitment of centriole biogenesis proteins such as sas-6. When overexpressed, it is able to induce centrosome amplification through the simultaneous generation of multiple procentrioles adjoining each parental centriole during S phase. Centrosome amplification following overexpression can initiate tumorigenesis, highlighting the importance of centrosome regulation in cancers. The polypeptide is Serine/threonine-protein kinase PLK4 (SAK) (Drosophila sechellia (Fruit fly)).